Here is a 389-residue protein sequence, read N- to C-terminus: Large ribosomal subunit protein uL3 (389 aa).

It belongs to the universal ribosomal protein uL3 family.

The protein resides in the cytoplasm. This Debaryomyces hansenii (strain ATCC 36239 / CBS 767 / BCRC 21394 / JCM 1990 / NBRC 0083 / IGC 2968) (Yeast) protein is Large ribosomal subunit protein uL3 (RPL3).